The following is an 817-amino-acid chain: Verprolin (817 aa).

Residues 1–15 (MAGAPAPPPPPPPPA) are compositionally biased toward pro residues. The tract at residues 1 to 752 (MAGAPAPPPP…THTNQPDVDV (752 aa)) is disordered. The WH2 1 domain maps to 30-47 (GRDALLGDIRKGMKLKKA). The span at 37-51 (DIRKGMKLKKAETND) shows a compositional bias: basic and acidic residues. Low complexity predominate over residues 62–79 (VSSASGSSGTVSSKGPSM). In terms of domain architecture, WH2 2 spans 87–106 (MGAPQLGDILAGGIPKLKHI). N109 carries an N-linked (GlcNAc...) asparagine glycan. The span at 119–180 (SAPPIPGAVP…VPSSPAPPLP (62 aa)) shows a compositional bias: pro residues. An N-linked (GlcNAc...) asparagine glycan is attached at N212. Pro residues predominate over residues 236 to 245 (PQAPPPPPTP). Over residues 254-265 (IKPTDNAVSPPS) the composition is skewed to polar residues. Pro residues predominate over residues 306–335 (SQPPLPSSAPPIPTSHAPPLPPTAPPPPSL). Low complexity predominate over residues 336-348 (PNVTSAPKKATSA). N337 carries N-linked (GlcNAc...) asparagine glycosylation. Positions 372-382 (PVPPTLAPPLP) are enriched in pro residues. N383 carries an N-linked (GlcNAc...) asparagine glycan. A compositionally biased stretch (low complexity) spans 383–395 (NTTSVPPNKASSM). Residues 396 to 407 (PAPPPPPPPPPG) are compositionally biased toward pro residues. Residues 408-422 (AFSTSSALSASSIPL) show a composition bias toward low complexity. The segment covering 423–432 (APLPPPPPPS) has biased composition (pro residues). Positions 447–469 (LTTNKPSASSKQSKISSSSSSSA) are enriched in low complexity. A compositionally biased stretch (basic and acidic residues) spans 502 to 516 (DKQEDVIGSSKDDNV). Over residues 518–534 (PSPISPSINPPKQSSQN) the composition is skewed to low complexity. Residue S519 is modified to Phosphoserine. Residues 557–579 (APPPHTDAMAPPLPPSAPPPPIT) show a composition bias toward pro residues. Residues 588–597 (GDDHTNDKSE) are compositionally biased toward basic and acidic residues. The span at 649–661 (PPSPPVAAAPPLP) shows a compositional bias: pro residues. The span at 713 to 737 (MDTGTSNSPSKNLKQRLFSTGGSTL) shows a compositional bias: polar residues. Residue S762 is modified to Phosphoserine. 2 N-linked (GlcNAc...) asparagine glycosylation sites follow: N784 and N796. The disordered stretch occupies residues 786–806 (SQMPKPRPFQNKTKLYPSGKG).

Belongs to the verprolin family. N-glycosylated.

Its subcellular location is the cytoplasm. It is found in the cytoskeleton. Functionally, involved in cytoskeletal organization and cellular growth. May exert its effects on the cytoskeleton directly, or indirectly via proline-binding proteins (e.g. profilin) or proteins possessing SH3 domains. The sequence is that of Verprolin (VRP1) from Saccharomyces cerevisiae (strain ATCC 204508 / S288c) (Baker's yeast).